Consider the following 113-residue polypeptide: Endoribonuclease SymE (113 aa).

Residues 29 to 74 form the SpoVT-AbrB domain; sequence SRYPDYSRIPAITLKGQWLEAAGFATGTVVDVKVMEGCIVLTAQPP.

This sequence belongs to the SymE family.

It is found in the cytoplasm. Functionally, involved in the degradation and recycling of damaged RNA. It is itself a target for degradation by the ATP-dependent protease Lon. This is Endoribonuclease SymE from Escherichia coli (strain 55989 / EAEC).